Reading from the N-terminus, the 196-residue chain is MNPHDRIVQHFHESIRTKQMAMDALTESIADAGHLMAQALQAEGKILSCGNGGSAGDAQHFSSELLNRFEMERPGLPAVALTTDSSTLTSIANDYSYQEVFAKQVRALGQAQDILLAISTSGQSGNVNAAVAAAHERGMAVVALSGKDGGEMAGLLAERDVEIRVPSDVTARIQEVHLLAIHCLCDLIDQHLFGGA.

Residues 36–196 (MAQALQAEGK…LIDQHLFGGA (161 aa)) form the SIS domain. Residue 51 to 53 (NGG) participates in substrate binding. Positions 60 and 64 each coordinate Zn(2+). Substrate contacts are provided by residues E64, 93 to 94 (ND), 119 to 121 (STS), S124, and Q174. Zn(2+)-binding residues include Q174 and H182.

It belongs to the SIS family. GmhA subfamily. Homotetramer. The cofactor is Zn(2+).

The protein resides in the cytoplasm. The catalysed reaction is 2 D-sedoheptulose 7-phosphate = D-glycero-alpha-D-manno-heptose 7-phosphate + D-glycero-beta-D-manno-heptose 7-phosphate. It participates in carbohydrate biosynthesis; D-glycero-D-manno-heptose 7-phosphate biosynthesis; D-glycero-alpha-D-manno-heptose 7-phosphate and D-glycero-beta-D-manno-heptose 7-phosphate from sedoheptulose 7-phosphate: step 1/1. In terms of biological role, catalyzes the isomerization of sedoheptulose 7-phosphate in D-glycero-D-manno-heptose 7-phosphate. This Alkalilimnicola ehrlichii (strain ATCC BAA-1101 / DSM 17681 / MLHE-1) protein is Phosphoheptose isomerase.